The sequence spans 582 residues: 2-succinyl-5-enolpyruvyl-6-hydroxy-3-cyclohexene-1-carboxylate synthase (582 aa).

This sequence belongs to the TPP enzyme family. MenD subfamily. Homodimer. Requires Mg(2+) as cofactor. Mn(2+) serves as cofactor. The cofactor is thiamine diphosphate.

It carries out the reaction isochorismate + 2-oxoglutarate + H(+) = 5-enolpyruvoyl-6-hydroxy-2-succinyl-cyclohex-3-ene-1-carboxylate + CO2. Its pathway is quinol/quinone metabolism; 1,4-dihydroxy-2-naphthoate biosynthesis; 1,4-dihydroxy-2-naphthoate from chorismate: step 2/7. It participates in cofactor biosynthesis; phylloquinone biosynthesis. Functionally, catalyzes the thiamine diphosphate-dependent decarboxylation of 2-oxoglutarate and the subsequent addition of the resulting succinic semialdehyde-thiamine pyrophosphate anion to isochorismate to yield 2-succinyl-5-enolpyruvyl-6-hydroxy-3-cyclohexene-1-carboxylate (SEPHCHC). In Prochlorococcus marinus (strain MIT 9303), this protein is 2-succinyl-5-enolpyruvyl-6-hydroxy-3-cyclohexene-1-carboxylate synthase.